Here is a 144-residue protein sequence, read N- to C-terminus: MKLNDLSPAPGSRREKHRPGRGIGSGLGKTGGRGHKGQSSRSGGTIAPGFEGGQQPLHRRLPKFGFVSLKAMDRAEVRLSELAKVEGDIVTVQSLKDANVINQNVQRVKIMLSGEVTRAVTIKGIAATKGARAAIEAAGGKFEE.

A disordered region spans residues 1–57 (MKLNDLSPAPGSRREKHRPGRGIGSGLGKTGGRGHKGQSSRSGGTIAPGFEGGQQPL). The span at 21 to 31 (RGIGSGLGKTG) shows a compositional bias: gly residues.

Belongs to the universal ribosomal protein uL15 family. As to quaternary structure, part of the 50S ribosomal subunit.

In terms of biological role, binds to the 23S rRNA. This Pseudomonas savastanoi pv. phaseolicola (strain 1448A / Race 6) (Pseudomonas syringae pv. phaseolicola (strain 1448A / Race 6)) protein is Large ribosomal subunit protein uL15.